Here is a 103-residue protein sequence, read N- to C-terminus: UPF0235 protein RL4503 (103 aa).

This sequence belongs to the UPF0235 family.

The chain is UPF0235 protein RL4503 from Rhizobium johnstonii (strain DSM 114642 / LMG 32736 / 3841) (Rhizobium leguminosarum bv. viciae).